The primary structure comprises 717 residues: Delta-1-pyrroline-5-carboxylate synthase (717 aa).

Residues 1–296 (METVDSTRAF…WASIGETDAR (296 aa)) form a glutamate 5-kinase region. Residues Ser60, Asp157, and Asn176 each coordinate substrate. Residues 196–197 (SD) and 236–242 (RGGMTAK) contribute to the ATP site. Residues 297–717 (EMAVAARACS…YSHKDLTQQG (421 aa)) are gamma-glutamyl phosphate reductase.

In the N-terminal section; belongs to the glutamate 5-kinase family. The protein in the C-terminal section; belongs to the gamma-glutamyl phosphate reductase family. Expressed at high levels in leaves and is inducible in roots subjected to salt stress.

The enzyme catalyses L-glutamate + ATP = L-glutamyl 5-phosphate + ADP. It catalyses the reaction L-glutamate 5-semialdehyde + phosphate + NADP(+) = L-glutamyl 5-phosphate + NADPH + H(+). It participates in amino-acid biosynthesis; L-proline biosynthesis; L-glutamate 5-semialdehyde from L-glutamate: step 1/2. It functions in the pathway amino-acid biosynthesis; L-proline biosynthesis; L-glutamate 5-semialdehyde from L-glutamate: step 2/2. With respect to regulation, feedback regulated by proline. In terms of biological role, P5CS plays a key role in proline biosynthesis, leading to osmoregulation in plants. In Solanum lycopersicum (Tomato), this protein is Delta-1-pyrroline-5-carboxylate synthase (PRO2).